The primary structure comprises 124 residues: Fluoride-specific ion channel FluC (124 aa).

Transmembrane regions (helical) follow at residues 4–24 (LLFV…MSII), 35–55 (FGTL…YALG), 62–82 (PELK…FSTF), and 95–115 (WFKS…MVYL). 2 residues coordinate Na(+): Gly74 and Thr77.

This sequence belongs to the fluoride channel Fluc/FEX (TC 1.A.43) family.

It localises to the cell inner membrane. It catalyses the reaction fluoride(in) = fluoride(out). Na(+) is not transported, but it plays an essential structural role and its presence is essential for fluoride channel function. Functionally, fluoride-specific ion channel. Important for reducing fluoride concentration in the cell, thus reducing its toxicity. The sequence is that of Fluoride-specific ion channel FluC from Shewanella denitrificans (strain OS217 / ATCC BAA-1090 / DSM 15013).